A 271-amino-acid polypeptide reads, in one-letter code: NADPH-dependent 7-cyano-7-deazaguanine reductase (271 aa).

Residue 81-83 (IES) coordinates substrate. Residue 83 to 84 (SK) coordinates NADPH. The active-site Thioimide intermediate is the Cys177. The active-site Proton donor is Asp184. 216 to 217 (HE) provides a ligand contact to substrate. 245–246 (RG) contributes to the NADPH binding site.

This sequence belongs to the GTP cyclohydrolase I family. QueF type 2 subfamily. As to quaternary structure, homodimer.

The protein localises to the cytoplasm. It carries out the reaction 7-aminomethyl-7-carbaguanine + 2 NADP(+) = 7-cyano-7-deazaguanine + 2 NADPH + 3 H(+). Its pathway is tRNA modification; tRNA-queuosine biosynthesis. Catalyzes the NADPH-dependent reduction of 7-cyano-7-deazaguanine (preQ0) to 7-aminomethyl-7-deazaguanine (preQ1). The protein is NADPH-dependent 7-cyano-7-deazaguanine reductase of Xanthomonas campestris pv. campestris (strain B100).